Consider the following 2290-residue polypeptide: Protein Ycf2 (2290 aa).

1644 to 1651 (GSIGTGRS) contacts ATP.

The protein belongs to the Ycf2 family.

The protein resides in the plastid. Its subcellular location is the chloroplast stroma. Probable ATPase of unknown function. Its presence in a non-photosynthetic plant (Epifagus virginiana) and experiments in tobacco indicate that it has an essential function which is probably not related to photosynthesis. The polypeptide is Protein Ycf2 (Barbarea verna (Land cress)).